Consider the following 688-residue polypeptide: Small ribosomal subunit protein mS39 (688 aa).

The N-terminal 37 residues, 1 to 37 (MASVASARWLRVSCGLCVPLTARRAGPCGRTPSSRFY), are a transit peptide targeting the mitochondrion. N6-acetyllysine is present on K126. PPR repeat units follow at residues 149-183 (IEEI…GTTV), 184-219 (SLET…EELE), 258-292 (NAHS…RLRA), 293-333 (DVHT…NVKP), 334-370 (NLQT…GIEP), 371-412 (SLAT…SPKD), 415-449 (DDMF…DNRK), 457-491 (RNFY…VFFP), 492-526 (HSQT…GHTF), and 575-609 (PANS…NKIP). Positions 667–688 (GDLTALTSDSESDSDSDTSKDK) are disordered.

The protein belongs to the mitochondrion-specific ribosomal protein mS39 family. Component of the mitochondrial ribosome small subunit (28S) which comprises a 12S rRNA and about 30 distinct proteins. Associated with the 12S mitochondrial rRNA (12S mt-rRNA).

The protein resides in the mitochondrion. In terms of biological role, mitochondrial RNA-binding protein that has a role in mitochondrial translation. The protein is Small ribosomal subunit protein mS39 (PTCD3) of Bos taurus (Bovine).